A 261-amino-acid chain; its full sequence is Yop proteins translocation protein T (261 aa).

7 helical membrane-spanning segments follow: residues phenylalanine 20 to leucine 40, isoleucine 44 to valine 64, isoleucine 77 to alanine 97, threonine 131 to histidine 151, isoleucine 180 to phenylalanine 200, valine 214 to cysteine 234, and serine 239 to leucine 259.

This sequence belongs to the FliR/MopE/SpaR family.

The protein resides in the cell membrane. Functionally, component of the yop secretion machinery. The sequence is that of Yop proteins translocation protein T (yscT) from Yersinia pestis.